A 517-amino-acid polypeptide reads, in one-letter code: Ribonuclease Y (517 aa).

A helical membrane pass occupies residues 1–21 (MIEVLIGLGAGVVGVGAGYLY). Residues 207 to 273 (LINVVNIKND…TRVIELLVED (67 aa)) form the KH domain. In terms of domain architecture, HD spans 333-426 (ALAHSLEVAH…VCAADALSAA (94 aa)).

Belongs to the RNase Y family.

It localises to the cell membrane. In terms of biological role, endoribonuclease that initiates mRNA decay. The sequence is that of Ribonuclease Y from Campylobacter concisus (strain 13826).